Reading from the N-terminus, the 233-residue chain is Glycerol-3-phosphate acyltransferase (233 aa).

The next 5 helical transmembrane spans lie at 7–27, 94–114, 127–147, 153–173, and 185–205; these read WIIIAIICSYLIGAIPFGYII, ISIVFGAAAAIGHIKSIYIGF, VIAINPIIGLSGIGLFFIVAF, SIGSVVASFSVAVMMWIGVLI, and ISYESQIINLVAISLIVLLII.

The protein belongs to the PlsY family. In terms of assembly, probably interacts with PlsX.

The protein localises to the cell membrane. It catalyses the reaction an acyl phosphate + sn-glycerol 3-phosphate = a 1-acyl-sn-glycero-3-phosphate + phosphate. Its pathway is lipid metabolism; phospholipid metabolism. In terms of biological role, catalyzes the transfer of an acyl group from acyl-phosphate (acyl-PO(4)) to glycerol-3-phosphate (G3P) to form lysophosphatidic acid (LPA). This enzyme utilizes acyl-phosphate as fatty acyl donor, but not acyl-CoA or acyl-ACP. This Acholeplasma laidlawii protein is Glycerol-3-phosphate acyltransferase.